The sequence spans 157 residues: CASP-like protein 1 (157 aa).

Residues 1–13 (MKTEARDGGSEWR) lie on the Cytoplasmic side of the membrane. Residues 14 to 34 (WVAIFELFLRLAAIVSTSVAV) form a helical membrane-spanning segment. The Extracellular segment spans residues 35-40 (YAAMGK). A helical transmembrane segment spans residues 41–61 (IFVVAVNGVACFYLLMSLPVS). Over 62 to 82 (IFNIMRPHAYPANRVFLNIMD) the chain is Cytoplasmic. Residues 83–103 (MVMVALVTAGALAAGIVYLVE) traverse the membrane as a helical segment. Residues 104 to 121 (KAGNARASWVSVWSQFDS) are Extracellular-facing. Residues 122-142 (SSCFAVLALILHVLLSGVILY) traverse the membrane as a helical segment. Residues 143 to 157 (KQALNIKFKKLDSVD) lie on the Cytoplasmic side of the membrane.

This sequence belongs to the Casparian strip membrane proteins (CASP) family. As to quaternary structure, homodimer and heterodimers.

It is found in the cell membrane. The polypeptide is CASP-like protein 1 (Picea sitchensis (Sitka spruce)).